The following is a 245-amino-acid chain: 1-(5-phosphoribosyl)-5-[(5-phosphoribosylamino)methylideneamino] imidazole-4-carboxamide isomerase (245 aa).

D8 serves as the catalytic Proton acceptor. D129 (proton donor) is an active-site residue.

It belongs to the HisA/HisF family.

The protein resides in the cytoplasm. The enzyme catalyses 1-(5-phospho-beta-D-ribosyl)-5-[(5-phospho-beta-D-ribosylamino)methylideneamino]imidazole-4-carboxamide = 5-[(5-phospho-1-deoxy-D-ribulos-1-ylimino)methylamino]-1-(5-phospho-beta-D-ribosyl)imidazole-4-carboxamide. It participates in amino-acid biosynthesis; L-histidine biosynthesis; L-histidine from 5-phospho-alpha-D-ribose 1-diphosphate: step 4/9. The protein is 1-(5-phosphoribosyl)-5-[(5-phosphoribosylamino)methylideneamino] imidazole-4-carboxamide isomerase of Pelobacter propionicus (strain DSM 2379 / NBRC 103807 / OttBd1).